The chain runs to 797 residues: MHTIRCLILSALSVAGAAQAQGSQDAAPAGRQPVGSVASPGLEMPGLRLSPGLRVRKLTEDQMPAFMEADDMSGEPSAELLLKGNAQVRRVDGVIKGDSIHYDDATSEVEVKGNARILRDATLVTGPSARINLNTYSGDIDKPNFWIGASGGTARAEHADIFSRSQMRLTDVYYSGCPCEKPSWYIKATSLDLDVDENEGVARNGVLYFKDVPILASPYLTFPIRKERKSGFLLPTYGTSSKTGLDISVPYYFNLAPNYDATLISRYMGKRGLQLGGDFRYLGYSYAGSVSGTYLPNDRDAGFDRYMYRLTHKQYLGSGFYTDWDISGVSDDNYYRDMTTLGLNTASTTYLPRQGRVGWSSNYWQTYVQVYKYRTLQDPDAPIVPPYDKEPEIFLQGARYDWNGFDVRMDSTAVRFRRPLFLGNRIGQEGERLEAYPTIAYPIVRAGWYFTPKAGLNYTQYHTSWFNQDWNRLGSLAPYRGTESRTLPIVSLDTGMTFERPTTLFGKDSTQTLEPRLYYLRVPYRNQSALPVYDTSLADFSFEQAFQENIYTGGWDRIANANQLTVGLTTRWLDASTGFQRVALSAAQRLYFEDQRVTLPGETPRENVRSDFLVGASAALTDTLTTDLAAQYNPYDNNWSRGLVSARWTPQRQTTLALAYRYQRDPISNISYAPRGQNQVTLAFQWPFTQRWYGVGRVDYAIRSDTGGVVGASDSARVTQAIAGLEYKGDCCWTGRVVFQRYAVAANDANTAVFFQLELTGLGALGTDPLKLLDKSIPGYQPVSQPTPAGTTFERYE.

The N-terminal stretch at 1–20 is a signal peptide; sequence MHTIRCLILSALSVAGAAQA. The interval 23–45 is disordered; the sequence is SQDAAPAGRQPVGSVASPGLEMP.

Belongs to the LptD family. Component of the lipopolysaccharide transport and assembly complex. Interacts with LptE and LptA.

It is found in the cell outer membrane. In terms of biological role, together with LptE, is involved in the assembly of lipopolysaccharide (LPS) at the surface of the outer membrane. The sequence is that of LPS-assembly protein LptD from Bordetella avium (strain 197N).